Reading from the N-terminus, the 79-residue chain is MKTQVLAVFVLCVLFCLAESRTTLNKRIDIAKRIECKCKGDAPDLSHMTGTVYFSCKGGDGSWSKCNTYTAVADCCHQA.

A signal peptide spans 1–20 (MKTQVLAVFVLCVLFCLAES). A propeptide spanning residues 21–31 (RTTLNKRIDIA) is cleaved from the precursor. Intrachain disulfides connect Cys36-Cys75, Cys38-Cys66, and Cys56-Cys76.

It belongs to the sea anemone sodium channel inhibitory toxin family.

The protein localises to the secreted. It localises to the nematocyst. Its function is as follows. In neuromuscular preparation of crustaceans, the toxin increased neurotransmitter release, causing repetitive firing of the axons. May affect sodium channels (Nav). The protein is Delta-hormotoxin-Cpt1a of Calliactis parasitica (Sea anemone).